The primary structure comprises 161 residues: Ribonuclease P protein component (161 aa).

The protein belongs to the RnpA family. Consists of a catalytic RNA component (M1 or rnpB) and a protein subunit.

The enzyme catalyses Endonucleolytic cleavage of RNA, removing 5'-extranucleotides from tRNA precursor.. RNaseP catalyzes the removal of the 5'-leader sequence from pre-tRNA to produce the mature 5'-terminus. It can also cleave other RNA substrates such as 4.5S RNA. The protein component plays an auxiliary but essential role in vivo by binding to the 5'-leader sequence and broadening the substrate specificity of the ribozyme. The sequence is that of Ribonuclease P protein component from Helicobacter pylori (strain J99 / ATCC 700824) (Campylobacter pylori J99).